The chain runs to 156 residues: H/ACA ribonucleoprotein complex subunit 2-like protein (156 aa).

It belongs to the eukaryotic ribosomal protein eL8 family. In terms of assembly, component of the small nucleolar ribonucleoprotein particle containing H/ACA-type snoRNAs (H/ACA snoRNPs).

It localises to the nucleus. It is found in the nucleolus. Functionally, required for ribosome biogenesis. Part of a complex which catalyzes pseudouridylation of rRNA. This involves the isomerization of uridine such that the ribose is subsequently attached to C5, instead of the normal N1. Pseudouridine ('psi') residues may serve to stabilize the conformation of rRNAs. In Arabidopsis thaliana (Mouse-ear cress), this protein is H/ACA ribonucleoprotein complex subunit 2-like protein.